The chain runs to 107 residues: EPIDERMAL PATTERNING FACTOR-like protein 5 (107 aa).

The N-terminal stretch at methionine 1–alanine 22 is a signal peptide. 3 cysteine pairs are disulfide-bonded: cysteine 64–cysteine 98, cysteine 68–cysteine 74, and cysteine 71–cysteine 100.

Belongs to the plant cysteine rich small secretory peptide family. Epidermal patterning factor subfamily. In terms of assembly, interacts with ERECTA. As to expression, expressed asymetically in the hypocotyl, on the side proximal to the folded cotyledons at germination. Detected in developing flowers, the chalazal region of ovules and near the root apex, but not in inflorescence stems. Expressed in cotyledons, flowers, adult leaves and fruits.

Its subcellular location is the secreted. In terms of biological role, controls stomatal patterning. Mediates differentiation of stomatal lineage cells to pavement cells and stomatal development inhibition. TMM (AC Q9SSD1) functions to dampen or block CLL1 signaling. Acts as a growth-regulatory ligand for ERECTA family receptors. Promotes fruit growth and fertility. The sequence is that of EPIDERMAL PATTERNING FACTOR-like protein 5 from Arabidopsis thaliana (Mouse-ear cress).